The sequence spans 489 residues: Coronin-1B (489 aa).

A Phosphoserine modification is found at Ser-2. WD repeat units follow at residues 80–120, 130–170, 174–213, 217–260, and 265–305; these read GHTG…LTSP, GHTK…ELYR, LHPD…LVAE, AHEG…EPMA, and DSSN…PYIH. The interval 414–443 is disordered; it reads DSRPAMAPGSSRLGAPASTTAAADATPSGS. A compositionally biased stretch (low complexity) spans 427–443; it reads GAPASTTAAADATPSGS. A coiled-coil region spans residues 449–474; the sequence is EAGKLEEVMQELRALRALVKEQGERI.

Belongs to the WD repeat coronin family. Forms homooligomers, but does not form complexes with the other coronins. Interacts with Arp2/3 complex components, including ACTR2, ARPC1B and ARPC2. Binds actin. Post-translationally, phosphorylation on Ser-2 regulates the interaction with the Arp2/3 complex and cell motility in fibroblasts. Phosphorylation does not seem to affect subcellular location.

The protein localises to the cytoplasm. It is found in the cytoskeleton. The protein resides in the stress fiber. Its function is as follows. Regulates leading edge dynamics and cell motility in fibroblasts. May be involved in cytokinesis and signal transduction. This Pongo abelii (Sumatran orangutan) protein is Coronin-1B (CORO1B).